The sequence spans 381 residues: Homoserine O-succinyltransferase (381 aa).

The AB hydrolase-1 domain occupies 45 to 360; it reads NAVLVCHALN…PHGHDAFLLD (316 aa). Catalysis depends on S151, which acts as the Nucleophile. Residue R221 coordinates substrate. Catalysis depends on residues D321 and H354. D355 lines the substrate pocket.

This sequence belongs to the AB hydrolase superfamily. MetX family. Homodimer.

The protein localises to the cytoplasm. It catalyses the reaction L-homoserine + succinyl-CoA = O-succinyl-L-homoserine + CoA. It participates in amino-acid biosynthesis; L-methionine biosynthesis via de novo pathway; O-succinyl-L-homoserine from L-homoserine: step 1/1. In terms of biological role, transfers a succinyl group from succinyl-CoA to L-homoserine, forming succinyl-L-homoserine. In Paraburkholderia phytofirmans (strain DSM 17436 / LMG 22146 / PsJN) (Burkholderia phytofirmans), this protein is Homoserine O-succinyltransferase.